The chain runs to 462 residues: UDP-N-acetylmuramoylalanine--D-glutamate ligase (462 aa).

117–123 (GTNGKTT) contacts ATP.

Belongs to the MurCDEF family.

The protein localises to the cytoplasm. It carries out the reaction UDP-N-acetyl-alpha-D-muramoyl-L-alanine + D-glutamate + ATP = UDP-N-acetyl-alpha-D-muramoyl-L-alanyl-D-glutamate + ADP + phosphate + H(+). It functions in the pathway cell wall biogenesis; peptidoglycan biosynthesis. In terms of biological role, cell wall formation. Catalyzes the addition of glutamate to the nucleotide precursor UDP-N-acetylmuramoyl-L-alanine (UMA). The protein is UDP-N-acetylmuramoylalanine--D-glutamate ligase of Parasynechococcus marenigrum (strain WH8102).